The following is a 190-amino-acid chain: Elongation factor P-like protein (190 aa).

It belongs to the elongation factor P family.

The polypeptide is Elongation factor P-like protein (Shigella dysenteriae serotype 1 (strain Sd197)).